A 502-amino-acid polypeptide reads, in one-letter code: Beta-glucosidase 7 (502 aa).

The signal sequence occupies residues 1-22; that stretch reads MKPFSQFFVFVVTVSATSYIDA. A beta-D-glucoside-binding positions include glutamine 42, histidine 140, and 185–186; that span reads NE. Residue glutamate 186 is the Proton donor of the active site. The N-linked (GlcNAc...) asparagine glycan is linked to asparagine 208. Tyrosine 325 contacts a beta-D-glucoside. Asparagine 359 is a glycosylation site (N-linked (GlcNAc...) asparagine). An a beta-D-glucoside-binding site is contributed by glutamate 392. Glutamate 392 functions as the Nucleophile in the catalytic mechanism. Asparagine 425 carries an N-linked (GlcNAc...) asparagine glycan. Residues tryptophan 435 and tyrosine 451 each contribute to the a beta-D-glucoside site. Residues asparagine 457 and asparagine 479 are each glycosylated (N-linked (GlcNAc...) asparagine).

This sequence belongs to the glycosyl hydrolase 1 family.

It carries out the reaction Hydrolysis of terminal, non-reducing beta-D-glucosyl residues with release of beta-D-glucose.. The chain is Beta-glucosidase 7 from Arabidopsis thaliana (Mouse-ear cress).